A 263-amino-acid polypeptide reads, in one-letter code: MIFMIITIASGKGGVGKTTTSASLAVALAKLGKKVLAIDGDISMANLGILFNMEKKKPSLHEVLSEEADVRDAIYKHKTGVYVLPTSLSLEGYKKSDIDLLPDVVNEVADDFDYVIIDAPAGLNREMATHLAIADKLLLVVTPEMFSIIDAVRLKESAEMAGTPLMGVVLNRVGRDFGEMGRDEIEMLIKGKVLVEVPEDENVRSAALKKMSVIEYRKNSPASQAYMKLASIIAGVPIYIEDEIKIIRKESFIDKIKRLFRMY.

12–19 provides a ligand contact to ATP; sequence KGGVGKTT.

It belongs to the ParA family. MinD subfamily.

This is an uncharacterized protein from Methanocaldococcus jannaschii (strain ATCC 43067 / DSM 2661 / JAL-1 / JCM 10045 / NBRC 100440) (Methanococcus jannaschii).